Reading from the N-terminus, the 242-residue chain is MNAEKPPVTHNVDHEEIAKFEAVASRWWDLEGEFKPLHRINPLRLGYIAERSGGLFGKKVLDVGCGGGILAESMAREGATVTGLDMGFEPLQVAKLHALESGIQVDYVQETVEEHAAKHAHQYDVVTCMEMLEHVPDPQSVVRACAQLVKPGGEVFFSTLNRNGKSWLMAVVGAEYILRMVPKGTHDVKKFIKPAELLNWVDQTVLKERHMTGLHYNPITNTFKLGPGVDVNYMVHTTAQVD.

S-adenosyl-L-methionine-binding residues include arginine 44, glycine 64, aspartate 85, and methionine 129.

It belongs to the methyltransferase superfamily. UbiG/COQ3 family.

The catalysed reaction is a 3-demethylubiquinol + S-adenosyl-L-methionine = a ubiquinol + S-adenosyl-L-homocysteine + H(+). The enzyme catalyses a 3-(all-trans-polyprenyl)benzene-1,2-diol + S-adenosyl-L-methionine = a 2-methoxy-6-(all-trans-polyprenyl)phenol + S-adenosyl-L-homocysteine + H(+). It participates in cofactor biosynthesis; ubiquinone biosynthesis. O-methyltransferase that catalyzes the 2 O-methylation steps in the ubiquinone biosynthetic pathway. The protein is Ubiquinone biosynthesis O-methyltransferase of Citrobacter koseri (strain ATCC BAA-895 / CDC 4225-83 / SGSC4696).